An 87-amino-acid polypeptide reads, in one-letter code: Apoptosis inducing factor BLCAP (87 aa).

The next 2 helical transmembrane spans lie at 19–39 (PALW…FLLE) and 43–63 (CTIC…SCWG).

The protein belongs to the BLCAP family. In terms of assembly, interacts with RB1 (phosphorylated and unphosphorylated). Interacts with STAT3; the interaction is promoted by cell stimulation with IL6 and phosphorylation of STAT3.

Its subcellular location is the cytoplasm. It is found in the nucleus. It localises to the membrane. Its function is as follows. Acts as a tumor suppressor; induces growth arrest at G(1)/S checkpoint and apoptosis via RB1-dependent and p53/TP53- and NF-kappa-B-independent mechanisms. Modulates expression of genes involved in the regulation of proliferation, cell cycle and apoptosis. The chain is Apoptosis inducing factor BLCAP (BLCAP) from Bos taurus (Bovine).